Reading from the N-terminus, the 258-residue chain is Thiazole synthase (258 aa).

K98 serves as the catalytic Schiff-base intermediate with DXP. 1-deoxy-D-xylulose 5-phosphate contacts are provided by residues G159, 185–186, and 207–208; these read AG and NT.

The protein belongs to the ThiG family. As to quaternary structure, homotetramer. Forms heterodimers with either ThiH or ThiS.

The protein resides in the cytoplasm. It carries out the reaction [ThiS sulfur-carrier protein]-C-terminal-Gly-aminoethanethioate + 2-iminoacetate + 1-deoxy-D-xylulose 5-phosphate = [ThiS sulfur-carrier protein]-C-terminal Gly-Gly + 2-[(2R,5Z)-2-carboxy-4-methylthiazol-5(2H)-ylidene]ethyl phosphate + 2 H2O + H(+). It functions in the pathway cofactor biosynthesis; thiamine diphosphate biosynthesis. In terms of biological role, catalyzes the rearrangement of 1-deoxy-D-xylulose 5-phosphate (DXP) to produce the thiazole phosphate moiety of thiamine. Sulfur is provided by the thiocarboxylate moiety of the carrier protein ThiS. In vitro, sulfur can be provided by H(2)S. The polypeptide is Thiazole synthase (Bacillus cereus (strain ATCC 14579 / DSM 31 / CCUG 7414 / JCM 2152 / NBRC 15305 / NCIMB 9373 / NCTC 2599 / NRRL B-3711)).